The following is a 287-amino-acid chain: 4-hydroxybenzoate octaprenyltransferase (287 aa).

The next 6 helical transmembrane spans lie at 23–40 (IGSL…WLAG), 98–118 (ILFV…NKMT), 141–161 (LPQF…YAAV), 163–183 (ESLP…TVAY), 213–233 (IIIG…GNIT), and 235–255 (LGIP…YQQI).

It belongs to the UbiA prenyltransferase family. Requires Mg(2+) as cofactor.

It localises to the cell inner membrane. It catalyses the reaction all-trans-octaprenyl diphosphate + 4-hydroxybenzoate = 4-hydroxy-3-(all-trans-octaprenyl)benzoate + diphosphate. It participates in cofactor biosynthesis; ubiquinone biosynthesis. Its function is as follows. Catalyzes the prenylation of para-hydroxybenzoate (PHB) with an all-trans polyprenyl group. Mediates the second step in the final reaction sequence of ubiquinone-8 (UQ-8) biosynthesis, which is the condensation of the polyisoprenoid side chain with PHB, generating the first membrane-bound Q intermediate 3-octaprenyl-4-hydroxybenzoate. This Pectobacterium atrosepticum (strain SCRI 1043 / ATCC BAA-672) (Erwinia carotovora subsp. atroseptica) protein is 4-hydroxybenzoate octaprenyltransferase.